Reading from the N-terminus, the 319-residue chain is ATP-dependent 6-phosphofructokinase (319 aa).

G11 is an ATP binding site. 21–25 (RAVVR) contributes to the ADP binding site. ATP is bound by residues 72-73 (RC) and 102-105 (GDGS). D103 contributes to the Mg(2+) binding site. 125–127 (TID) serves as a coordination point for substrate. D127 serves as the catalytic Proton acceptor. R154 contacts ADP. Substrate is bound by residues R162 and 169 to 171 (MGR). ADP-binding positions include 185 to 187 (GAE), R211, and 213 to 215 (KKH). Substrate contacts are provided by residues E222, R243, and 249 to 252 (HIQR).

This sequence belongs to the phosphofructokinase type A (PFKA) family. ATP-dependent PFK group I subfamily. Prokaryotic clade 'B1' sub-subfamily. As to quaternary structure, homotetramer. The cofactor is Mg(2+).

The protein localises to the cytoplasm. The enzyme catalyses beta-D-fructose 6-phosphate + ATP = beta-D-fructose 1,6-bisphosphate + ADP + H(+). Its pathway is carbohydrate degradation; glycolysis; D-glyceraldehyde 3-phosphate and glycerone phosphate from D-glucose: step 3/4. With respect to regulation, allosterically activated by ADP and other diphosphonucleosides, and allosterically inhibited by phosphoenolpyruvate. Its function is as follows. Catalyzes the phosphorylation of D-fructose 6-phosphate to fructose 1,6-bisphosphate by ATP, the first committing step of glycolysis. The chain is ATP-dependent 6-phosphofructokinase from Shouchella clausii (strain KSM-K16) (Alkalihalobacillus clausii).